The following is a 726-amino-acid chain: Catalase-peroxidase (726 aa).

A compositionally biased stretch (polar residues) spans 1–13 (MSMSEETNNSLSS). The segment at 1-34 (MSMSEETNNSLSSGKCPFHHGGSDQSAGEGTGSR) is disordered. Residues 105–226 (WHGAGTYRSV…LAATEMGLIY (122 aa)) constitute a cross-link (tryptophyl-tyrosyl-methioninium (Trp-Tyr) (with M-252)). H106 functions as the Proton acceptor in the catalytic mechanism. Residues 226-252 (YVNPEGPNASGEPLSAAAAIRATFGNM) constitute a cross-link (tryptophyl-tyrosyl-methioninium (Tyr-Met) (with W-105)). Heme b is bound at residue H267.

The protein belongs to the peroxidase family. Peroxidase/catalase subfamily. In terms of assembly, homodimer or homotetramer. It depends on heme b as a cofactor. Post-translationally, formation of the three residue Trp-Tyr-Met cross-link is important for the catalase, but not the peroxidase activity of the enzyme.

The enzyme catalyses H2O2 + AH2 = A + 2 H2O. It carries out the reaction 2 H2O2 = O2 + 2 H2O. In terms of biological role, bifunctional enzyme with both catalase and broad-spectrum peroxidase activity. This is Catalase-peroxidase from Enterobacter sp. (strain 638).